The sequence spans 171 residues: Lipoprotein signal peptidase (171 aa).

The next 3 membrane-spanning stretches (helical) occupy residues 8-28 (SFLWLSAVAFVIDLLTKYIVV), 64-84 (WQQYFFILLALAISGMLVYFL), and 99-119 (ALIIGGALANMVDRAYNGFVV). Active-site residues include aspartate 120 and aspartate 138. The helical transmembrane segment at 133 to 153 (VFNIADIAICIGAGLLVLDAF) threads the bilayer.

The protein belongs to the peptidase A8 family.

It localises to the cell inner membrane. The enzyme catalyses Release of signal peptides from bacterial membrane prolipoproteins. Hydrolyzes -Xaa-Yaa-Zaa-|-(S,diacylglyceryl)Cys-, in which Xaa is hydrophobic (preferably Leu), and Yaa (Ala or Ser) and Zaa (Gly or Ala) have small, neutral side chains.. The protein operates within protein modification; lipoprotein biosynthesis (signal peptide cleavage). This protein specifically catalyzes the removal of signal peptides from prolipoproteins. In Haemophilus influenzae (strain ATCC 51907 / DSM 11121 / KW20 / Rd), this protein is Lipoprotein signal peptidase.